Reading from the N-terminus, the 65-residue chain is Large ribosomal subunit protein bL35 (65 aa).

The segment covering 1–16 (MPKMKTKSGAKKRFRV) has biased composition (basic residues). The interval 1-25 (MPKMKTKSGAKKRFRVRPGGTVKRG) is disordered.

This sequence belongs to the bacterial ribosomal protein bL35 family.

In Herminiimonas arsenicoxydans, this protein is Large ribosomal subunit protein bL35.